Here is a 331-residue protein sequence, read N- to C-terminus: Ketol-acid reductoisomerase (NADP(+)) (331 aa).

The region spanning 2–182 is the KARI N-terminal Rossmann domain; the sequence is ARMYYDADAN…GGTRAGILET (181 aa). NADP(+) contacts are provided by residues 25-28, serine 51, serine 53, and 83-86; these read YGSQ and DEVQ. Histidine 108 is a catalytic residue. An NADP(+)-binding site is contributed by glycine 134. A KARI C-terminal knotted domain is found at 183–328; the sequence is SFREETETDL…KDLRAMFSWL (146 aa). Mg(2+) is bound by residues aspartate 191, glutamate 195, glutamate 227, and glutamate 231. Serine 252 is a substrate binding site.

The protein belongs to the ketol-acid reductoisomerase family. It depends on Mg(2+) as a cofactor.

It carries out the reaction (2R)-2,3-dihydroxy-3-methylbutanoate + NADP(+) = (2S)-2-acetolactate + NADPH + H(+). It catalyses the reaction (2R,3R)-2,3-dihydroxy-3-methylpentanoate + NADP(+) = (S)-2-ethyl-2-hydroxy-3-oxobutanoate + NADPH + H(+). The protein operates within amino-acid biosynthesis; L-isoleucine biosynthesis; L-isoleucine from 2-oxobutanoate: step 2/4. Its pathway is amino-acid biosynthesis; L-valine biosynthesis; L-valine from pyruvate: step 2/4. Functionally, involved in the biosynthesis of branched-chain amino acids (BCAA). Catalyzes an alkyl-migration followed by a ketol-acid reduction of (S)-2-acetolactate (S2AL) to yield (R)-2,3-dihydroxy-isovalerate. In the isomerase reaction, S2AL is rearranged via a Mg-dependent methyl migration to produce 3-hydroxy-3-methyl-2-ketobutyrate (HMKB). In the reductase reaction, this 2-ketoacid undergoes a metal-dependent reduction by NADPH to yield (R)-2,3-dihydroxy-isovalerate. This chain is Ketol-acid reductoisomerase (NADP(+)), found in Crocosphaera subtropica (strain ATCC 51142 / BH68) (Cyanothece sp. (strain ATCC 51142)).